The following is a 244-amino-acid chain: DNA repair protein RecO (244 aa).

It belongs to the RecO family.

Involved in DNA repair and RecF pathway recombination. This Nocardioides sp. (strain ATCC BAA-499 / JS614) protein is DNA repair protein RecO.